We begin with the raw amino-acid sequence, 527 residues long: Inositolphosphotransferase 1 (527 aa).

Topologically, residues 1–24 (MNVIFSLASFVKNMYNASLNQRNL) are cytoplasmic. A helical membrane pass occupies residues 25–45 (ISLPFNFMLNFAPVFIWLSIF). Residues 46 to 99 (KRAGLIPIRLRPDIHSKFAFFADQFLFGDYWHELTVQLPDNTSKLFFWSFISSS) are Lumenal-facing. The helical transmembrane segment at 100–120 (AFLLVFLICIPFAIWYYIYYI) threads the bilayer. The Cytoplasmic segment spans residues 121–152 (KHVNYNLLEWFANIFHYPCKRKQRPIQKRFRT). The chain crosses the membrane as a helical span at residues 153-173 (IFIPFALPLFTFVILNIDHFF). The Lumenal portion of the chain corresponds to 174–190 (AYQSDANFTKTKDLLAW). Residues 191-211 (FSYVILHLTAPILTAVYLYVF) traverse the membrane as a helical segment. The Cytoplasmic portion of the chain corresponds to 212–219 (QPPGTLKC). A helical transmembrane segment spans residues 220–240 (FSFALGLQNIAGVLTHLLVPM). Residues 241–288 (ASPWFTHLYGIDDTEHVNYTQEGFAAGLIRVDSHLGTHLNTKGFHMSP) are Lumenal-facing. The helical transmembrane segment at 289 to 309 (IVFGAVPSLHSAIAFQCFLFL) threads the bilayer. Topologically, residues 310-435 (VSRSTSLKHR…KWIFKIVNDG (126 aa)) are cytoplasmic. The segment at 331-404 (NDSSTFKLSE…GGGDGSIINS (74 aa)) is disordered. Residues 376 to 389 (ERSSSPSSSFTVSS) show a composition bias toward low complexity. A helical transmembrane segment spans residues 436–456 (FIPKFWAILYIILQWWATMYL). Topologically, residues 457–461 (DHHYR) are lumenal. A helical membrane pass occupies residues 462-482 (FDLFVGVLYAMTSFIIINWFV). Residues 483–527 (LQPKVLKKWIHIRLGDKVDTRNEARTFGMRVFCGTKMEWFFDPLA) are Cytoplasmic-facing.

It localises to the golgi apparatus membrane. It carries out the reaction an alpha-D-mannosyl-(1&lt;-&gt;6)-1D-myo-inositol-1-phospho-N-[(R)-2-hydroxy-very-long-chain fatty acyl]-(R)-4-hydroxysphingoid base + a 1,2-diacyl-sn-glycero-3-phospho-(1D-myo-inositol) = an alpha-D-mannosyl-6-(1D-myo-inositol phospho)-(1&lt;-&gt;6)-1D-myo-inositol-1-phospho-N-[(R)-2-hydroxy-very-long-chain fatty acyl]-(R)-4-hydroxysphingoid base + a 1,2-diacyl-sn-glycerol. It catalyses the reaction a mannosylinositol-1-phospho-N-acyl-sphingoid base + a 1,2-diacyl-sn-glycero-3-phospho-(1D-myo-inositol) = an inositol phosphomannosylnositol-1-phospho-N-acylsphingoid base + a 1,2-diacyl-sn-glycerol. The catalysed reaction is a mannosylinositol-1-phospho-N-(2-hydroxyacyl)-4R-hydroxysphingoid base + a 1,2-diacyl-sn-glycero-3-phospho-(1D-myo-inositol) = an inositol phosphomannosylnositol-1-phospho-N-(2-hydroxyacyl)-4R-hydroxysphingoid base + a 1,2-diacyl-sn-glycerol. Functionally, catalyzes the addition of a phosphorylinositol group onto mannosyl phosphorylinositol ceramide (MIPC) to form mannosyl diphosphorylinositol ceramide (M(IP)2C), the major sphingolipid in membranes of S.cerevisiae. The polypeptide is Inositolphosphotransferase 1 (Saccharomyces cerevisiae (strain ATCC 204508 / S288c) (Baker's yeast)).